Here is a 345-residue protein sequence, read N- to C-terminus: S-adenosylmethionine:tRNA ribosyltransferase-isomerase (345 aa).

This sequence belongs to the QueA family. As to quaternary structure, monomer.

The protein localises to the cytoplasm. It catalyses the reaction 7-aminomethyl-7-carbaguanosine(34) in tRNA + S-adenosyl-L-methionine = epoxyqueuosine(34) in tRNA + adenine + L-methionine + 2 H(+). It participates in tRNA modification; tRNA-queuosine biosynthesis. Transfers and isomerizes the ribose moiety from AdoMet to the 7-aminomethyl group of 7-deazaguanine (preQ1-tRNA) to give epoxyqueuosine (oQ-tRNA). This chain is S-adenosylmethionine:tRNA ribosyltransferase-isomerase, found in Helicobacter pylori (strain G27).